The sequence spans 137 residues: Protein PsiE homolog (137 aa).

Helical transmembrane passes span 13-35 (ILLRITLNLALIMVGFTLVAFLI), 55-77 (YYMTQDILTFFLYFEFIALIVKY), 84-103 (FPLRYFIYIGITAIIRFIIV), and 107-129 (SATSTLILSGAILLLVAALFLAN).

This sequence belongs to the PsiE family.

It localises to the cell membrane. The sequence is that of Protein PsiE homolog from Listeria monocytogenes serotype 4b (strain F2365).